Reading from the N-terminus, the 418-residue chain is Putative methylthiotransferase HP_0285 (418 aa).

The 109-residue stretch at 2-110 folds into the MTTase N-terminal domain; that stretch reads KKVYFKTFGC…INALLQEKKR (109 aa). 6 residues coordinate [4Fe-4S] cluster: cysteine 11, cysteine 45, cysteine 74, cysteine 144, cysteine 148, and cysteine 151. Residues 130–355 enclose the Radical SAM core domain; it reads FVGKTRAFIK…KDLIFHKNKA (226 aa).

This sequence belongs to the methylthiotransferase family. Requires [4Fe-4S] cluster as cofactor.

In Helicobacter pylori (strain ATCC 700392 / 26695) (Campylobacter pylori), this protein is Putative methylthiotransferase HP_0285.